Consider the following 337-residue polypeptide: Glyceraldehyde-3-phosphate dehydrogenase 3 (337 aa).

NAD(+)-binding positions include 12 to 13 (RM) and K80. D-glyceraldehyde 3-phosphate is bound by residues 152–154 (SCT) and T183. C153 functions as the Nucleophile in the catalytic mechanism. Residue N184 coordinates NAD(+). Residues R198, 211 to 212 (TG), and R234 contribute to the D-glyceraldehyde 3-phosphate site. NAD(+) is bound at residue N317.

The protein belongs to the glyceraldehyde-3-phosphate dehydrogenase family. As to quaternary structure, homotetramer.

The protein localises to the cytoplasm. It carries out the reaction D-glyceraldehyde 3-phosphate + phosphate + NAD(+) = (2R)-3-phospho-glyceroyl phosphate + NADH + H(+). It functions in the pathway carbohydrate degradation; glycolysis; pyruvate from D-glyceraldehyde 3-phosphate: step 1/5. The protein operates within carbohydrate biosynthesis; gluconeogenesis. Its function is as follows. Catalyzes the oxidative phosphorylation of glyceraldehyde 3-phosphate (G3P) to 1,3-bisphosphoglycerate (BPG) using the cofactor NAD. The first reaction step involves the formation of a hemiacetal intermediate between G3P and a cysteine residue, and this hemiacetal intermediate is then oxidized to a thioester, with concomitant reduction of NAD to NADH. The reduced NADH is then exchanged with the second NAD, and the thioester is attacked by a nucleophilic inorganic phosphate to produce BPG. The polypeptide is Glyceraldehyde-3-phosphate dehydrogenase 3 (gap3) (Nostoc sp. (strain PCC 7120 / SAG 25.82 / UTEX 2576)).